The sequence spans 407 residues: Tyrosine--tRNA ligase (407 aa).

Residues 47–56 carry the 'HIGH' region motif; that stretch reads PTAPDLHLGA. Positions 231–235 match the 'KMSKS' region motif; sequence KMSKS. Residue Lys234 participates in ATP binding. The S4 RNA-binding domain occupies 342-403; the sequence is PRLSQLLVQV…GKRHFARVAL (62 aa).

This sequence belongs to the class-I aminoacyl-tRNA synthetase family. TyrS type 2 subfamily. As to quaternary structure, homodimer.

It localises to the cytoplasm. It carries out the reaction tRNA(Tyr) + L-tyrosine + ATP = L-tyrosyl-tRNA(Tyr) + AMP + diphosphate + H(+). In terms of biological role, catalyzes the attachment of tyrosine to tRNA(Tyr) in a two-step reaction: tyrosine is first activated by ATP to form Tyr-AMP and then transferred to the acceptor end of tRNA(Tyr). This Acidithiobacillus ferrooxidans (Thiobacillus ferrooxidans) protein is Tyrosine--tRNA ligase.